The following is a 336-amino-acid chain: uncharacterized protein (336 aa).

2 disordered regions span residues 29-93 (GGVS…HSGA) and 116-147 (LQER…GVTG). Polar residues-rich tracts occupy residues 70 to 82 (SGGS…TSTA) and 125 to 141 (PWRT…SQPH).

This is an uncharacterized protein from Bos taurus (Bovine).